The sequence spans 438 residues: Adenosylhomocysteinase (438 aa).

Substrate-binding residues include Thr-64, Asp-139, and Glu-164. 165–167 (TTT) contributes to the NAD(+) binding site. Lys-194 and Asp-198 together coordinate substrate. NAD(+)-binding positions include Asn-199, 228-233 (GYGDVG), Glu-251, Asn-286, 307-309 (IGH), and Asn-352.

The protein belongs to the adenosylhomocysteinase family. The cofactor is NAD(+).

Its subcellular location is the cytoplasm. The catalysed reaction is S-adenosyl-L-homocysteine + H2O = L-homocysteine + adenosine. The protein operates within amino-acid biosynthesis; L-homocysteine biosynthesis; L-homocysteine from S-adenosyl-L-homocysteine: step 1/1. In terms of biological role, may play a key role in the regulation of the intracellular concentration of adenosylhomocysteine. In Coxiella burnetii (strain Dugway 5J108-111), this protein is Adenosylhomocysteinase.